Consider the following 201-residue polypeptide: Small ribosomal subunit protein uS4c (201 aa).

The interval 15–43 is disordered; the sequence is LGALPGLTSKRPRSGSDLRNQSRSGKRSQ. The S4 RNA-binding domain occupies 89-150; sequence MRLDNILFRL…KERSRALIQN (62 aa).

This sequence belongs to the universal ribosomal protein uS4 family. In terms of assembly, part of the 30S ribosomal subunit. Contacts protein S5. The interaction surface between S4 and S5 is involved in control of translational fidelity.

It localises to the plastid. Its subcellular location is the chloroplast. One of the primary rRNA binding proteins, it binds directly to 16S rRNA where it nucleates assembly of the body of the 30S subunit. Its function is as follows. With S5 and S12 plays an important role in translational accuracy. The chain is Small ribosomal subunit protein uS4c (rps4) from Amborella trichopoda.